A 34-amino-acid chain; its full sequence is Trypsin inhibitor (34 aa).

Disulfide bonds link Cys-7/Cys-29 and Cys-11/Cys-25.

Its subcellular location is the secreted. Its function is as follows. Inhibits trypsin. This is Trypsin inhibitor from Veronica hederifolia (Ivy-leaved speedwell).